The sequence spans 390 residues: Cell division protein FtsZ (390 aa).

GTP-binding positions include 20–24, 106–108, Glu-137, Arg-141, and Asp-184; these read GGGNN and GTG.

This sequence belongs to the FtsZ family. In terms of assembly, homodimer. Polymerizes to form a dynamic ring structure in a strictly GTP-dependent manner. Interacts directly with several other division proteins.

Its subcellular location is the cytoplasm. Its function is as follows. Essential cell division protein that forms a contractile ring structure (Z ring) at the future cell division site. The regulation of the ring assembly controls the timing and the location of cell division. One of the functions of the FtsZ ring is to recruit other cell division proteins to the septum to produce a new cell wall between the dividing cells. Binds GTP and shows GTPase activity. This chain is Cell division protein FtsZ, found in Mycoplasmopsis pulmonis (strain UAB CTIP) (Mycoplasma pulmonis).